The primary structure comprises 434 residues: Glutamate-1-semialdehyde 2,1-aminomutase 1 (434 aa).

Lys-268 carries the N6-(pyridoxal phosphate)lysine modification.

This sequence belongs to the class-III pyridoxal-phosphate-dependent aminotransferase family. HemL subfamily. In terms of assembly, homodimer. Requires pyridoxal 5'-phosphate as cofactor.

The protein resides in the cytoplasm. The enzyme catalyses (S)-4-amino-5-oxopentanoate = 5-aminolevulinate. The protein operates within porphyrin-containing compound metabolism; protoporphyrin-IX biosynthesis; 5-aminolevulinate from L-glutamyl-tRNA(Glu): step 2/2. This Shouchella clausii (strain KSM-K16) (Alkalihalobacillus clausii) protein is Glutamate-1-semialdehyde 2,1-aminomutase 1.